The chain runs to 80 residues: Raniseptin-8 (80 aa).

Positions 1–22 (MAFLKKSLFLVLFLGIVSLSIC) are cleaved as a signal peptide. Positions 23–49 (EEEKREGEEEEKQEEENEELSEEELRE) are excised as a propeptide. The tract at residues 27–46 (REGEEEEKQEEENEELSEEE) is disordered. Acidic residues predominate over residues 30 to 44 (EEEEKQEEENEELSE).

The protein belongs to the frog skin active peptide (FSAP) family. Dermaseptin subfamily. As to expression, expressed by the skin glands.

Its subcellular location is the secreted. In terms of biological role, has antibacterial activity. This chain is Raniseptin-8, found in Boana raniceps (Chaco tree frog).